A 452-amino-acid chain; its full sequence is Trigger factor (452 aa).

The PPIase FKBP-type domain occupies 170–255; that stretch reads GDRVTIDFTG…VKSVAAPGPL (86 aa).

Belongs to the FKBP-type PPIase family. Tig subfamily.

It localises to the cytoplasm. It catalyses the reaction [protein]-peptidylproline (omega=180) = [protein]-peptidylproline (omega=0). In terms of biological role, involved in protein export. Acts as a chaperone by maintaining the newly synthesized protein in an open conformation. Functions as a peptidyl-prolyl cis-trans isomerase. The polypeptide is Trigger factor (Xanthobacter autotrophicus (strain ATCC BAA-1158 / Py2)).